We begin with the raw amino-acid sequence, 177 residues long: RNA silencing suppressor (177 aa).

As to quaternary structure, homooctamer. The eight monomers assemble into a closed ring that binds RNA.

Its subcellular location is the host cytoplasm. Acts as a suppressor of RNA-mediated gene silencing, also known as post-transcriptional gene silencing (PTGS), a mechanism of plant viral defense that limits the accumulation of viral RNAs. Binds to ssRNAs and dsRNAs in vitro. Also functions as a replication enhancer. The protein is RNA silencing suppressor of Beta vulgaris (Sugar beet).